The following is a 223-amino-acid chain: Endonuclease NucS (223 aa).

Belongs to the NucS endonuclease family.

The protein localises to the cytoplasm. In terms of biological role, cleaves both 3' and 5' ssDNA extremities of branched DNA structures. This Mycobacterium marinum (strain ATCC BAA-535 / M) protein is Endonuclease NucS.